The sequence spans 487 residues: 3-ketoacyl-CoA synthase 17 (487 aa).

Transmembrane regions (helical) follow at residues 23-43 and 57-77; these read LITHFFKLMFLPLMAVLFMNV and STGFIFVITLAIVGSIVFFMS. Positions 74 to 363 constitute an FAE domain; it reads FFMSRPRSIY…FFATFVAKRL (290 aa). Residues cysteine 218, histidine 297, histidine 382, histidine 386, histidine 415, and asparagine 419 contribute to the active site.

This sequence belongs to the thiolase-like superfamily. Chalcone/stilbene synthases family. As to expression, expressed in flowers.

The protein resides in the membrane. It carries out the reaction a very-long-chain acyl-CoA + malonyl-CoA + H(+) = a very-long-chain 3-oxoacyl-CoA + CO2 + CoA. It functions in the pathway lipid metabolism; fatty acid biosynthesis. With respect to regulation, inhibited by K3 herbicides such as alachlor, allidochlor, anilofos, cafenstrole, fentrazamide and flufenacet. Strongly inhibited by metazachlor. In terms of biological role, active on saturated acyl-CoAs up to C22. Mediates the synthesis of VLCFAs from 20 to 26 carbons in length (e.g. C20:1, C20, C24, C26). In Arabidopsis thaliana (Mouse-ear cress), this protein is 3-ketoacyl-CoA synthase 17.